Consider the following 195-residue polypeptide: dITP/XTP pyrophosphatase (195 aa).

T8–K13 provides a ligand contact to substrate. The Mg(2+) site is built by E39 and D68. D68 acts as the Proton acceptor in catalysis. Substrate-binding positions include S69, F149–D152, K172, and H177–R178.

Belongs to the HAM1 NTPase family. In terms of assembly, homodimer. It depends on Mg(2+) as a cofactor.

It carries out the reaction XTP + H2O = XMP + diphosphate + H(+). The enzyme catalyses dITP + H2O = dIMP + diphosphate + H(+). The catalysed reaction is ITP + H2O = IMP + diphosphate + H(+). In terms of biological role, pyrophosphatase that catalyzes the hydrolysis of nucleoside triphosphates to their monophosphate derivatives, with a high preference for the non-canonical purine nucleotides XTP (xanthosine triphosphate), dITP (deoxyinosine triphosphate) and ITP. Seems to function as a house-cleaning enzyme that removes non-canonical purine nucleotides from the nucleotide pool, thus preventing their incorporation into DNA/RNA and avoiding chromosomal lesions. This is dITP/XTP pyrophosphatase from Staphylococcus epidermidis (strain ATCC 12228 / FDA PCI 1200).